Consider the following 403-residue polypeptide: NADH-quinone oxidoreductase subunit D (403 aa).

It belongs to the complex I 49 kDa subunit family. NDH-1 is composed of 14 different subunits. Subunits NuoB, C, D, E, F, and G constitute the peripheral sector of the complex.

Its subcellular location is the cell membrane. It carries out the reaction a quinone + NADH + 5 H(+)(in) = a quinol + NAD(+) + 4 H(+)(out). Its function is as follows. NDH-1 shuttles electrons from NADH, via FMN and iron-sulfur (Fe-S) centers, to quinones in the respiratory chain. The immediate electron acceptor for the enzyme in this species is believed to be a menaquinone. Couples the redox reaction to proton translocation (for every two electrons transferred, four hydrogen ions are translocated across the cytoplasmic membrane), and thus conserves the redox energy in a proton gradient. The chain is NADH-quinone oxidoreductase subunit D from Amoebophilus asiaticus (strain 5a2).